The following is a 344-amino-acid chain: Protein RecA (344 aa).

65–72 provides a ligand contact to ATP; that stretch reads GPESSGKT. Positions 323-337 are enriched in basic and acidic residues; sequence ELREKFQPAEAPREA. The tract at residues 323 to 344 is disordered; it reads ELREKFQPAEAPREAGDDEDKE.

This sequence belongs to the RecA family.

It is found in the cytoplasm. Its function is as follows. Can catalyze the hydrolysis of ATP in the presence of single-stranded DNA, the ATP-dependent uptake of single-stranded DNA by duplex DNA, and the ATP-dependent hybridization of homologous single-stranded DNAs. It interacts with LexA causing its activation and leading to its autocatalytic cleavage. The polypeptide is Protein RecA (Xanthomonas euvesicatoria pv. vesicatoria (strain 85-10) (Xanthomonas campestris pv. vesicatoria)).